The sequence spans 404 residues: Serine/threonine transporter SstT (404 aa).

The next 9 helical transmembrane spans lie at 11 to 31, 44 to 64, 82 to 102, 144 to 164, 179 to 199, 218 to 238, 290 to 310, 316 to 336, and 363 to 383; these read IINA…IILA, LGGL…FVLV, IISL…TMSF, TANY…LHHA, VSFI…GLVA, GVLL…MVFI, IPLG…VLTL, MGIQ…AISA, and VAMQ…SAET.

The protein belongs to the dicarboxylate/amino acid:cation symporter (DAACS) (TC 2.A.23) family.

The protein resides in the cell inner membrane. It carries out the reaction L-serine(in) + Na(+)(in) = L-serine(out) + Na(+)(out). It catalyses the reaction L-threonine(in) + Na(+)(in) = L-threonine(out) + Na(+)(out). Its function is as follows. Involved in the import of serine and threonine into the cell, with the concomitant import of sodium (symport system). In Desulfotalea psychrophila (strain LSv54 / DSM 12343), this protein is Serine/threonine transporter SstT.